We begin with the raw amino-acid sequence, 1050 residues long: Beta-galactosidase (1050 aa).

2 residues coordinate substrate: Asn100 and Asp199. Asp199 serves as a coordination point for Na(+). Residues Glu422, His424, and Glu467 each coordinate Mg(2+). Residues Glu467 and Glu543–His546 contribute to the substrate site. The active-site Proton donor is Glu467. Catalysis depends on Glu543, which acts as the Nucleophile. Mg(2+) is bound at residue Asn603. Phe607 and Asn610 together coordinate Na(+). Substrate contacts are provided by Asn610 and Trp1025.

It belongs to the glycosyl hydrolase 2 family. As to quaternary structure, homotetramer. It depends on Mg(2+) as a cofactor. Requires Na(+) as cofactor.

It carries out the reaction Hydrolysis of terminal non-reducing beta-D-galactose residues in beta-D-galactosides.. This is Beta-galactosidase from Yersinia pestis bv. Antiqua (strain Angola).